The chain runs to 1100 residues: MSVEAYGPSSQTLTFLDTEEAELLGADTQGSEFEFTDFTLPSQTQTQGQTQSQLDNQVNGPDGVLPNGEDAVGKTSQLLAELNFEEDEEDTYYTKDLPVHACSYCGIHDPACVVYCNTSKKWFCNGRGNTSGSHIVNHLVRAKCKEVTLHKDGPLGETVLECYNCGCRNVFLLGFIPAKADSVVVLLCRQPCASQSSLKDINWDSSQWQPLIQDRCFLSWLVKIPSEQEQLRARQITAQQINKLEELWKENPTATLEDLEKPGVDEEPQHVLLRYEDAYQYQNIFGPLVKLEADYDKKLKESQTQDNITVRWDLGLNKKRIAYFTLPKTDSGDMRLMQGDEICLRYKGDMAPLWKGIGHVIKVPDNYGDEIAIELRSSAGAPVEVPHNFQVDFVWKSTSFDRMQSALKTFAVDETSVSGYIYHKLLGHEVEDVIIKCQLPKRFTAQGLPDLNHSQVYAVKTVLQRPLSLIQGPPGTGKTVTSATIVYHLARQGNGPVLVCAPSNIAVDQLTEKIHQTGLKVVRLCAKSREAIDSPVSFLALHNQIRNMDSMPELQKLQQLKDETGELSSSDEKRYRALKRTAERELLMNADVICCTCVGAGDPRLAKMQFRSILIDESTQATEPECMVPVVLGAKQLILVGDHCQLGPVVMCKKAAKAGLSQSLFERLVVLGIRPIRLQVQYRMHPALSAFPSNIFYEGSLQNGVTAADRLKKGFDFQWPQPDKPMFFYVTQGQEEIASSGTSYLNRTEAANVEKITTRLLKAGAKPDQIGIITPYEGQRSYLVQYMQFSGSLHTKLYQEVEIASVDAFQGREKDFIILSCVRANEHQGIGFLNDPRRLNVALTRARYGVIIVGNPKALSKQPLWNHLLNYYKEQKVLVEGPLNNLRESLMQFSKPRKLVNTINPGARFMSTAMYDAREAMIPGSVYDRSSTGRPSNMYFQTHDQVGMIGTGPNPMGSLNIPIPFNLVMPPMPPPGYLGQVNGPAAGRGAPKGKTGGRGGRQRNRGTGNHGSGQPNMPNSQASQDLVSQPFSQGPLTQGYITMSQPSQMSQPGLSQPELSQDSYLGDEFKSQMDVALSQDSTYQGERAYQHGGVTGLSQY.

Over residues 42-53 (SQTQTQGQTQSQ) the composition is skewed to low complexity. The interval 42 to 67 (SQTQTQGQTQSQLDNQVNGPDGVLPN) is disordered. A Upf1 CH-rich domain is found at 94 to 251 (TKDLPVHACS…NKLEELWKEN (158 aa)). 12 residues coordinate Zn(2+): Cys102, Cys105, Cys116, Ser119, Cys124, His134, His138, Cys144, Cys162, Cys165, Cys188, and Cys192. The segment at 102-134 (CSYCGIHDPACVVYCNTSKKWFCNGRGNTSGSH) is C3H. Positions 116 to 144 (CNTSKKWFCNGRGNTSGSHIVNHLVRAKC) are CC/SHH/C. Positions 162–192 (CYNCGCRNVFLLGFIPAKADSVVVLLCRQPC) are C4. ATP is bound by residues Gln455, 475–479 (GTGKT), Gln645, Tyr682, and Glu813. Residues 978–1065 (LGQVNGPAAG…QPELSQDSYL (88 aa)) are disordered. The span at 982–993 (NGPAAGRGAPKG) shows a compositional bias: low complexity. A compositionally biased stretch (polar residues) spans 1012–1063 (SGQPNMPNSQASQDLVSQPFSQGPLTQGYITMSQPSQMSQPGLSQPELSQDS).

The protein belongs to the DNA2/NAM7 helicase family.

The protein resides in the cytoplasm. It localises to the P-body. The protein localises to the nucleus. Its subcellular location is the perinuclear region. Its function is as follows. RNA-dependent helicase and ATPase required for nonsense-mediated decay (NMD) of mRNAs containing premature stop codons. Is recruited to mRNAs upon translation termination and undergoes a cycle of phosphorylation and dephosphorylation; its phosphorylation appears to be a key step in NMD. The formation of an upf1-upf2-upf3 surveillance complex is believed to activate NMD. The polypeptide is Regulator of nonsense transcripts 1 (Danio rerio (Zebrafish)).